Reading from the N-terminus, the 115-residue chain is Large ribosomal subunit protein bL19 (115 aa).

Belongs to the bacterial ribosomal protein bL19 family.

In terms of biological role, this protein is located at the 30S-50S ribosomal subunit interface and may play a role in the structure and function of the aminoacyl-tRNA binding site. The protein is Large ribosomal subunit protein bL19 of Edwardsiella ictaluri (strain 93-146).